The chain runs to 345 residues: Dihydroorotase (345 aa).

Zn(2+) is bound by residues His13 and His15. Substrate-binding positions include 15-17 (HFR) and Asn41. The Zn(2+) site is built by Lys98, His135, and His173. Lys98 bears the N6-carboxylysine mark. His135 provides a ligand contact to substrate. Leu218 is a binding site for substrate. A Zn(2+)-binding site is contributed by Asp246. Residue Asp246 is part of the active site. Substrate contacts are provided by His250 and Ala262.

The protein belongs to the metallo-dependent hydrolases superfamily. DHOase family. Class II DHOase subfamily. As to quaternary structure, homodimer. The cofactor is Zn(2+).

It catalyses the reaction (S)-dihydroorotate + H2O = N-carbamoyl-L-aspartate + H(+). It participates in pyrimidine metabolism; UMP biosynthesis via de novo pathway; (S)-dihydroorotate from bicarbonate: step 3/3. Its function is as follows. Catalyzes the reversible cyclization of carbamoyl aspartate to dihydroorotate. The chain is Dihydroorotase from Shewanella pealeana (strain ATCC 700345 / ANG-SQ1).